A 437-amino-acid polypeptide reads, in one-letter code: CMP-5'-(3-aminopropyl)phosphonate hydroxylase (437 aa).

It depends on FAD as a cofactor.

The enzyme catalyses CMP-5'-(3-aminopropyl)phosphonate + NADPH + O2 = CMP-5'-(N-hydroxy-3-aminopropyl)phosphonate + NADP(+) + H2O. It functions in the pathway antibiotic biosynthesis. Its function is as follows. Hydroxylase involved in the biosynthesis of the phosphonate antibiotic FR-900098, a potent antimalarial agent that acts as an inhibitor of 1-deoxy-D-xylulose 5-phosphate reductoisomerase (DXR), the first enzyme in the nonmevalonate pathway for isoprenoid biosynthesis. Catalyzes the N-hydroxylation of CMP-5'-3-aminopropylphosphonate (CMP-5'-3APn) to CMP-5'-(N-hydroxy-3-aminopropyl)phosphonate (CMP-5'-H3APn). Cannot use CMP-5'-N-acetyl-3-aminopropylphosphonate (CMP-5'-Ac3APn) as a substrate. The chain is CMP-5'-(3-aminopropyl)phosphonate hydroxylase from Streptomyces rubellomurinus (strain ATCC 31215).